A 693-amino-acid polypeptide reads, in one-letter code: Golgin subfamily A member 6A (693 aa).

Residues 14–611 (LEESRQNKLA…KLLELQELVL (598 aa)) adopt a coiled-coil conformation. 3 disordered regions span residues 20–69 (NKLA…PGDS), 497–547 (LPGE…GTEQ), and 661–693 (NVEPAPGAAREGSPHDNPTVQQIVQLSPVMQDT). The span at 54-69 (SPETTTSGGCHSPGDS) shows a compositional bias: polar residues. The segment covering 537–547 (LPKEKADGTEQ) has biased composition (basic and acidic residues). A compositionally biased stretch (polar residues) spans 676-693 (DNPTVQQIVQLSPVMQDT).

It belongs to the GOLGA6 family. As to expression, highly expressed in seminiferous tubes in testis. Highly expressed in spermatids, barely detectable in late pachytene spermatocytes, and not detectable in spermatogonia. Detected at intermediate levels in pancreas and lymph nodes, and at much lower levels in spleen, peripheral blood leukocytes, skeletal muscle, liver, lung, placenta, brain and heart.

The polypeptide is Golgin subfamily A member 6A (GOLGA6A) (Homo sapiens (Human)).